We begin with the raw amino-acid sequence, 117 residues long: Ig heavy chain V region 108A (117 aa).

The first 19 residues, 1-19, serve as a signal peptide directing secretion; that stretch reads MGWSWIFLFLLSGTAGVHS. An Ig-like domain is found at 20 to 117; it reads EVQLQQSGPE…EDSAVYYCAR (98 aa).

The sequence is that of Ig heavy chain V region 108A (Igh-VJ558) from Mus musculus (Mouse).